Reading from the N-terminus, the 390-residue chain is tRNA(Met) cytidine acetate ligase (390 aa).

Residues 7 to 20 (VVEY…HKLH), glycine 101, asparagine 162, and arginine 187 contribute to the ATP site.

This sequence belongs to the TmcAL family.

It localises to the cytoplasm. The enzyme catalyses cytidine(34) in elongator tRNA(Met) + acetate + ATP = N(4)-acetylcytidine(34) in elongator tRNA(Met) + AMP + diphosphate. Functionally, catalyzes the formation of N(4)-acetylcytidine (ac(4)C) at the wobble position of elongator tRNA(Met), using acetate and ATP as substrates. First activates an acetate ion to form acetyladenylate (Ac-AMP) and then transfers the acetyl group to tRNA to form ac(4)C34. This chain is tRNA(Met) cytidine acetate ligase, found in Listeria monocytogenes serotype 4b (strain CLIP80459).